The primary structure comprises 105 residues: Small ribosomal subunit protein uS10 (105 aa).

The protein belongs to the universal ribosomal protein uS10 family. In terms of assembly, part of the 30S ribosomal subunit.

Its function is as follows. Involved in the binding of tRNA to the ribosomes. This is Small ribosomal subunit protein uS10 from Rickettsia typhi (strain ATCC VR-144 / Wilmington).